A 253-amino-acid polypeptide reads, in one-letter code: uncharacterized protein (253 aa).

An N-terminal signal peptide occupies residues 1–19 (MHYLKKVTIYISLLILVSG). Cys-20 is lipidated: N-palmitoyl cysteine. A lipid anchor (S-diacylglycerol cysteine) is attached at Cys-20.

This sequence belongs to the staphylococcal tandem lipoprotein family.

Its subcellular location is the cell membrane. This is an uncharacterized protein from Staphylococcus epidermidis (strain ATCC 35984 / DSM 28319 / BCRC 17069 / CCUG 31568 / BM 3577 / RP62A).